A 518-amino-acid polypeptide reads, in one-letter code: Putative Rieske 2Fe-2S iron-sulfur protein MSMEG_6410/MSMEI_6242 (518 aa).

Lysine 375 participates in a covalent cross-link: Isoglutamyl lysine isopeptide (Lys-Gln) (interchain with Q-Cter in protein Pup). Residues 431 to 518 form the Rieske domain; sequence LYTFFKCLTD…KGHELRCQKL (88 aa). Residues cysteine 471, histidine 473, cysteine 491, and histidine 494 each coordinate [2Fe-2S] cluster.

[2Fe-2S] cluster is required as a cofactor.

The chain is Putative Rieske 2Fe-2S iron-sulfur protein MSMEG_6410/MSMEI_6242 from Mycolicibacterium smegmatis (strain ATCC 700084 / mc(2)155) (Mycobacterium smegmatis).